Consider the following 480-residue polypeptide: Docking protein 1 (480 aa).

At Met-1 the chain carries N-acetylmethionine. The region spanning Gly-3–Phe-119 is the PH domain. Ser-48 is subject to Phosphoserine. The IRS-type PTB domain occupies Glu-151 to Gly-259. Low complexity predominate over residues Lys-253–Gln-262. Positions Lys-253–Gly-328 are disordered. The segment covering Thr-265–Gly-276 has biased composition (basic and acidic residues). A phosphoserine mark is found at Ser-269 and Ser-290. 3 positions are modified to phosphotyrosine: Tyr-295, Tyr-336, and Tyr-340. At Tyr-361 the chain carries Phosphotyrosine; by INSR. At Tyr-376 the chain carries Phosphotyrosine. At Tyr-397 the chain carries Phosphotyrosine; by INSR. Residues Glu-398–Thr-480 are disordered. Phosphotyrosine is present on Tyr-408. A compositionally biased stretch (pro residues) spans Val-410–Lys-423. Ser-415 is subject to Phosphoserine. Low complexity predominate over residues Ser-432–Thr-445. The span at Ala-446–Gly-455 shows a compositional bias: polar residues. At Tyr-448 the chain carries Phosphotyrosine.

Belongs to the DOK family. Type A subfamily. As to quaternary structure, interacts with RasGAP and INPP5D/SHIP1. Interacts directly with phosphorylated ITGB3. Interacts with SRMS (via the SH2 and SH3 domains). In terms of processing, constitutively tyrosine-phosphorylated. Phosphorylated by TEC. Phosphorylated by LYN. Phosphorylated on tyrosine residues by the insulin receptor kinase. Results in the negative regulation of the insulin signaling pathway. Phosphorylated on tyrosine residues by SRMS.

The protein resides in the cytoplasm. Its subcellular location is the nucleus. Functionally, DOK proteins are enzymatically inert adaptor or scaffolding proteins. They provide a docking platform for the assembly of multimolecular signaling complexes. DOK1 appears to be a negative regulator of the insulin signaling pathway. Modulates integrin activation by competing with talin for the same binding site on ITGB3. This chain is Docking protein 1 (Dok1), found in Rattus norvegicus (Rat).